A 570-amino-acid chain; its full sequence is Hydroxylamine reductase (570 aa).

Cys5, Cys8, Cys17, and Cys23 together coordinate [4Fe-4S] cluster. Residues His266, Glu290, Cys334, Cys425, Cys453, Cys478, Glu513, and Lys515 each coordinate hybrid [4Fe-2O-2S] cluster. Cys425 bears the Cysteine persulfide mark.

The protein belongs to the HCP family. The cofactor is [4Fe-4S] cluster. It depends on hybrid [4Fe-2O-2S] cluster as a cofactor.

It localises to the cytoplasm. It carries out the reaction A + NH4(+) + H2O = hydroxylamine + AH2 + H(+). Functionally, catalyzes the reduction of hydroxylamine to form NH(3) and H(2)O. The chain is Hydroxylamine reductase from Clostridium botulinum (strain Langeland / NCTC 10281 / Type F).